The chain runs to 328 residues: Fe(3+) ions import ATP-binding protein FbpC 1 (328 aa).

An ABC transporter domain is found at 7 to 237; the sequence is LVLKNITKAF…PNSLFLANFM (231 aa). Residue 39–46 coordinates ATP; it reads GPSGCGKT.

This sequence belongs to the ABC transporter superfamily. Fe(3+) ion importer (TC 3.A.1.10) family. In terms of assembly, the complex is composed of two ATP-binding proteins (FbpC), two transmembrane proteins (FbpB) and a solute-binding protein (FbpA).

Its subcellular location is the cell inner membrane. It catalyses the reaction Fe(3+)(out) + ATP + H2O = Fe(3+)(in) + ADP + phosphate + H(+). Functionally, part of the ABC transporter complex FbpABC involved in Fe(3+) ions import. Responsible for energy coupling to the transport system. The polypeptide is Fe(3+) ions import ATP-binding protein FbpC 1 (Haemophilus influenzae (strain ATCC 51907 / DSM 11121 / KW20 / Rd)).